A 596-amino-acid chain; its full sequence is Endoribonuclease ZC3H12A (596 aa).

Disordered regions lie at residues 1-48 (MSDP…TSEL) and 97-134 (QALT…EGSD). Over residues 10–19 (VQESNPTMSL) the composition is skewed to polar residues. Residues 42 to 87 (EAPTSELQMKVDFFRKLGYSSSEIHSVLQKLGVQADTNTVLGELVK) form a ubiquitin association domain region. Residues 81-150 (VLGELVKHGS…DGSNVAMSHG (70 aa)) form a necessary for interaction with TANK region. Positions 112-281 (GGSTPKPSTL…DKFMPPDDPL (170 aa)) are RNase. The RNase NYN domain maps to 135 to 290 (LRPVVIDGSN…LGRHGPSLDN (156 aa)). The tract at residues 214–220 (RRVGGKR) is RNA binding. D226 is a Mg(2+) binding site. Disordered regions lie at residues 278–306 (DDPL…KQPC) and 340–417 (NALL…PTEW). Residues 301-324 (HRKQPCPYGKKCTYGIKCRFFHPE) form a C3H1-type zinc finger. The necessary for interaction with ZC3H12D stretch occupies residues 301 to 454 (HRKQPCPYGK…SELWGVRGGS (154 aa)). Residue S344 is modified to Phosphoserine. Residues 356 to 368 (QRPSPASQSSSVS) show a composition bias toward low complexity. 2 positions are modified to phosphoserine: S435 and S439. The segment at 511-543 (YWSEPYPLPPPTPVLQEPQRPSPGAGGGPWGRV) is disordered. A compositionally biased stretch (low complexity) spans 524–533 (VLQEPQRPSP).

This sequence belongs to the ZC3H12 family. As to quaternary structure, oligomer. Found in a deubiquitination complex with TANK, USP10 and ZC3H12A; this complex inhibits genotoxic stress- or interleukin-1-beta-mediated NF-kappaB activation by promoting IKBKG or TRAF6 deubiquitination. Interacts with IKBKG; this interaction increases in response to DNA damage. Interacts with TANK; this interaction increases in response to DNA damage and serves as a bridge to anchor both TANK and USP10 into a deubiquitinating complex. Interacts with TRAF6; this interaction increases in response to DNA damage and is stimulated by TANK. Interacts with USP10; this interaction increases in response to DNA damage and serves as a bridge to anchor both TANK and USP10 into a deubiquitinating complex. Interacts with ZC3H12D. Interacts with TNRC6A. Interacts with IKBKB/IKKB. Interacts with IKBKB/IKKB. Interacts with IKBKB/IKKB. Interacts with BTRC; the interaction occurs when ZC3H12A is phosphorylated in a IKBKB/IKKB-dependent manner. Interacts with IRAK1; this interaction increases the interaction between ZC3H12A and IKBKB/IKKB. Interacts with UPF1; this interaction occurs in a mRNA translationally active- and termination-dependent manner and is essential for ZC3H12A-mediated degradation of target mRNAs. Associates with ribosomes. Interacts with ubiquitin. It depends on Mg(2+) as a cofactor. Post-translationally, proteolytically cleaved between Arg-111 and Arg-214 by MALT1 in activated T-cells; cleavage at Arg-111 is critical for promoting ZC3H12A degradation in response to T-cell receptor (TCR) stimulation, and hence is necessary for prolonging the stability of a set of mRNAs controlling T-cell activation and Th17 cell differentiation. Phosphorylated by IRAK1; phosphorylation is necessary for subsequent phosphorylation by the I-kappa-B-kinase (IKK) complex. Phosphorylated by I-kappa-B-kinases (IKKs) at Ser-435 and Ser-439 upon lipopolysaccharide (LPS) or IL1B stimulation in macrophages through the MyD88-dependent signaling pathway; these phosphorylations promote rapid ubiquitin proteasome-mediated degradation of ZC3H12A in macrophages and hence allows its target mRNAs, such as IL6, to escape from degradation and accumulate during the inflammatory response. In terms of processing, ubiquitinated; ubiquitination is induced in response to interleukin IL1 receptor stimuli in a IKBKB/IKKB and IRAK1-dependent manner, leading to proteasome-mediated degradation. As to expression, expressed in CD4(+) helper T-cells (at protein level). Highly expressed in macrophages. Expressed in lung, lymph nodes, spleen and thymus. Expressed weakly in heart. Expressed weakly in cardiomyocytes (at protein level). Expressed in spleen, lung, intestine, brown adipose tissue and thymus. Weakly expressed in the heart. Weakly expressed in cardiomyocytes.

It localises to the nucleus. It is found in the cytoplasm. The protein localises to the rough endoplasmic reticulum membrane. Its subcellular location is the cytoplasmic granule. The protein resides in the P-body. Endoribonuclease involved in various biological functions such as cellular inflammatory response and immune homeostasis, glial differentiation of neuroprogenitor cells, cell death of cardiomyocytes, adipogenesis and angiogenesis. Functions as an endoribonuclease involved in mRNA decay. Modulates the inflammatory response by promoting the degradation of a set of translationally active cytokine-induced inflammation-related mRNAs, such as IL6 and IL12B, during the early phase of inflammation. Prevents aberrant T-cell-mediated immune reaction by degradation of multiple mRNAs controlling T-cell activation, such as those encoding cytokines (IL6 and IL2), cell surface receptors (ICOS, TNFRSF4 and TNFR2) and transcription factor (REL). Inhibits cooperatively with ZC3H12A the differentiation of helper T cells Th17 in lungs. They repress target mRNA encoding the Th17 cell-promoting factors IL6, ICOS, REL, IRF4, NFKBID and NFKBIZ. The cooperation requires RNA-binding by RC3H1 and the nuclease activity of ZC3H12A. Together with RC3H1, destabilizes TNFRSF4/OX40 mRNA by binding to the conserved stem loop structure in its 3'UTR. Self regulates by destabilizing its own mRNA. Cleaves mRNA harboring a stem-loop (SL), often located in their 3'-UTRs, during the early phase of inflammation in a helicase UPF1-dependent manner. Plays a role in the inhibition of microRNAs (miRNAs) biogenesis. Cleaves the terminal loop of a set of precursor miRNAs (pre-miRNAs) important for the regulation of the inflammatory response leading to their degradation, and thus preventing the biosynthesis of mature miRNAs. Also plays a role in promoting angiogenesis in response to inflammatory cytokines by inhibiting the production of antiangiogenic microRNAs via its anti-dicer RNase activity. Affects the overall ubiquitination of cellular proteins. Positively regulates deubiquitinase activity promoting the cleavage at 'Lys-48'- and 'Lys-63'-linked polyubiquitin chains on TNF receptor-associated factors (TRAFs), preventing JNK and NF-kappa-B signaling pathway activation, and hence negatively regulating macrophage-mediated inflammatory response and immune homeostasis. Induces also deubiquitination of the transcription factor HIF1A, probably leading to its stabilization and nuclear import, thereby positively regulating the expression of proangiogenic HIF1A-targeted genes. Involved in a TANK-dependent negative feedback response to attenuate NF-kappaB activation through the deubiquitination of IKBKG or TRAF6 in response to interleukin-1-beta (IL1B) stimulation or upon DNA damage. Prevents stress granules (SGs) formation and promotes macrophage apoptosis under stress conditions, including arsenite-induced oxidative stress, heat shock, and energy deprivation. Plays a role in the regulation of macrophage polarization; promotes IL4-induced polarization of macrophages M1 into anti-inflammatory M2 state. May also act as a transcription factor that regulates the expression of multiple genes involved in inflammatory response, angiogenesis, adipogenesis and apoptosis. Functions as a positive regulator of glial differentiation of neuroprogenitor cells through an amyloid precursor protein (APP)-dependent signaling pathway. Attenuates septic myocardial contractile dysfunction in response to lipopolysaccharide (LPS) by reducing I-kappa-B-kinase (IKK)-mediated NF-kappa-B activation, and hence myocardial pro-inflammatory cytokine production. The protein is Endoribonuclease ZC3H12A of Mus musculus (Mouse).